A 402-amino-acid chain; its full sequence is Type II NADH:quinone oxidoreductase (402 aa).

FAD contacts are provided by residues 12 to 16 (GAGYA), 39 to 40 (NK), and Val83. Glu172 is a catalytic residue. FAD contacts are provided by residues Asp302, 319–320 (AQ), and Lys379.

Belongs to the NADH dehydrogenase family. The cofactor is FAD.

It is found in the cell membrane. It catalyses the reaction a quinone + NADH + H(+) = a quinol + NAD(+). Functionally, alternative, nonproton pumping NADH:quinone oxidoreductase that delivers electrons to the respiratory chain by oxidation of NADH and reduction of quinones, and contributes to the regeneration of NAD(+). The chain is Type II NADH:quinone oxidoreductase from Staphylococcus aureus (strain bovine RF122 / ET3-1).